We begin with the raw amino-acid sequence, 668 residues long: Probable tRNA (uracil-O(2)-)-methyltransferase (668 aa).

Residues 441-460 are disordered; that stretch reads QHTDSLHISTKSSLDKDDPP. The C3H1-type zinc-finger motif lies at 620-649; the sequence is LKTRLCWFYVHHPNGCPRVAKSCPYAHGAE.

The protein belongs to the TRM44 family.

It is found in the cytoplasm. The catalysed reaction is uridine(44) in tRNA(Ser) + S-adenosyl-L-methionine = 2'-O-methyluridine(44) in tRNA(Ser) + S-adenosyl-L-homocysteine + H(+). Its function is as follows. Probable adenosyl-L-methionine (AdoMet)-dependent tRNA (uracil-O(2)-)-methyltransferase. In Xenopus laevis (African clawed frog), this protein is Probable tRNA (uracil-O(2)-)-methyltransferase (trmt44).